A 227-amino-acid chain; its full sequence is MLCCMRRTKQVEKNDEDQKIEQDGVKPEDKAHKAATKIQASFRGHITRKKLKGEKKGDAPAAEAEAKEKDDAPVADGVEKKEGDGSATTDAAPATSPKAEEPSKAGDAPSEEKKGEGDAAPSEEKAGSAETESAAKATTDNSPSSKAEDGPAKEEPKQADVPAAVTDAAATTPAAEDAATKAAQPPTETAESSQAEEEKDAVDEAKPKESARQDEGKEDPEADQEHA.

The segment at 1-227 is disordered; that stretch reads MLCCMRRTKQ…EDPEADQEHA (227 aa). 2 S-palmitoyl cysteine lipidation sites follow: cysteine 3 and cysteine 4. The segment covering 9–32 has biased composition (basic and acidic residues); it reads KQVEKNDEDQKIEQDGVKPEDKAH. An IQ domain is found at 31 to 60; it reads AHKAATKIQASFRGHITRKKLKGEKKGDAP. At serine 41 the chain carries Phosphoserine; by PHK. The segment covering 54 to 84 has biased composition (basic and acidic residues); the sequence is EKKGDAPAAEAEAKEKDDAPVADGVEKKEGD. Positions 85-97 are enriched in low complexity; the sequence is GSATTDAAPATSP. Phosphoserine occurs at positions 86 and 96. Residues 98 to 127 show a composition bias toward basic and acidic residues; that stretch reads KAEEPSKAGDAPSEEKKGEGDAAPSEEKAG. The segment covering 128–139 has biased composition (low complexity); sequence SAETESAAKATT. Threonine 138 is modified (phosphothreonine). A phosphoserine mark is found at serine 142, serine 144, and serine 145. Basic and acidic residues predominate over residues 146-158; it reads KAEDGPAKEEPKQ. Residues 159–193 are compositionally biased toward low complexity; sequence ADVPAAVTDAAATTPAAEDAATKAAQPPTETAESS. Position 172 is a phosphothreonine (threonine 172). Phosphoserine; by CK2 occurs at positions 192 and 193. The span at 202-215 shows a compositional bias: basic and acidic residues; it reads VDEAKPKESARQDE. Residues 216–227 show a composition bias toward acidic residues; the sequence is GKEDPEADQEHA.

It belongs to the neuromodulin family. As to quaternary structure, identified in a complex containing FGFR4, NCAM1, CDH2, PLCG1, FRS2, SRC, SHC1, GAP43 and CTTN. Interacts (via IQ domain) with calmodulin. Binds calmodulin with a greater affinity in the absence of Ca(2+) than in its presence. In terms of processing, phosphorylated. Phosphorylation of this protein by a protein kinase C is specifically correlated with certain forms of synaptic plasticity. Palmitoylated by ZDHHC3. Palmitoylation is regulated by ARF6 and is essential for plasma membrane association and axonal and dendritic filopodia induction. Deacylated by LYPLA2. In terms of tissue distribution, expressed in the hippocampus (at protein level). Expressed in the dorsal root ganglion and the spinal cord (at protein level).

The protein resides in the cell membrane. The protein localises to the cell projection. Its subcellular location is the growth cone membrane. It localises to the synapse. It is found in the filopodium membrane. The protein resides in the perikaryon. The protein localises to the dendrite. Its subcellular location is the axon. It localises to the cytoplasm. Functionally, this protein is associated with nerve growth. It is a major component of the motile 'growth cones' that form the tips of elongating axons. Plays a role in axonal and dendritic filopodia induction. The sequence is that of Neuromodulin (Gap43) from Mus musculus (Mouse).